A 412-amino-acid polypeptide reads, in one-letter code: Peptidase T (412 aa).

His-84 is a Zn(2+) binding site. Residue Asp-86 is part of the active site. Asp-146 serves as a coordination point for Zn(2+). The active-site Proton acceptor is the Glu-179. Glu-180, Asp-202, and His-385 together coordinate Zn(2+).

Belongs to the peptidase M20B family. It depends on Zn(2+) as a cofactor.

It localises to the cytoplasm. The catalysed reaction is Release of the N-terminal residue from a tripeptide.. In terms of biological role, cleaves the N-terminal amino acid of tripeptides. The chain is Peptidase T from Haemophilus influenzae (strain PittGG).